The chain runs to 2387 residues: Paternally-expressed gene 3 protein (2387 aa).

Positions 44 to 126 (HQRFRNFLYV…ALLEDYEAMY (83 aa)) constitute an SCAN box domain. Disordered regions lie at residues 127–194 (EPED…RDLA), 262–305 (DGHS…ICEA), 321–371 (ARSS…AFGG), and 392–423 (RYHFDAEGQGPVHDPRGGARKRPFECGGEARR). 4 stretches are compositionally biased toward basic and acidic residues: residues 160–179 (SERERRRGRSRDMESRDRWP), 291–305 (PETKKSAHRRGICEA), 321–364 (ARSS…ERGP), and 404–423 (HDPRGGARKRPFECGGEARR). Residues 451–473 (YVCDECGRSFAVISEFVEHQIVH) form a C2H2-type 1 zinc finger. The segment at 492-542 (SEAQSRPEGARRSEGAQAAGLAEHRGGQAQEHLRGSGDEEQDEPFLPSPTF) is disordered. Positions 513–528 (AEHRGGQAQEHLRGSG) are enriched in basic and acidic residues. 2 consecutive C2H2-type zinc fingers follow at residues 555–577 (YECKVCKETFLHSSALIEHQKIH) and 610–632 (YECKVCGETFHHSAALREHQKTH). Residues 668–690 (YDFREGGDAFGRSSDFMEHQKIH) form a C2H2-type 4; degenerate zinc finger. Disordered regions lie at residues 704-747 (PLLH…EARG), 764-797 (FRPPRGLREDGEPSTYLSGLRDPPQKTPAWESPY), and 820-858 (DHLAGEGPSGWQRDGEASGPSSDGRQHQKARAKKKNIER). Over residues 711–720 (MPGSQKSHTI) the composition is skewed to polar residues. The segment covering 846–856 (HQKARAKKKNI) has biased composition (basic residues). Residues 884–906 (YECLECGEFFVRSSELAEHQKIH) form a C2H2-type 5 zinc finger. 57 consecutive repeat copies span residues 965 to 973 (PAQTSYAVE), 974 to 982 (PAQTSYAEE), 983 to 991 (PAQTSYTEA), 1001 to 1009 (PAQTSCIEE), 1010 to 1018 (PAQTSYTNP), 1028 to 1036 (PAQTSYTEA), 1046 to 1054 (PAQTSCIEE), 1055 to 1063 (PAQTSYTNP), 1073 to 1081 (PAQTSYTEA), 1091 to 1099 (PAQTNYTEE), 1109 to 1117 (PSQTSCIEE), 1118 to 1126 (PAQTSYTDP), 1136 to 1144 (PAQTSYTQE), 1145 to 1153 (PAQTSCTEE), 1154 to 1162 (PAQTSCTEE), 1163 to 1171 (PAQTSYTQE), 1172 to 1180 (PAQTSYTKE), 1190 to 1198 (PAQTSCIEE), 1199 to 1207 (PAQTNYTKE), 1217 to 1225 (PAQTSYTDP), 1235 to 1243 (PAQTNYTVE), 1253 to 1261 (PSQTSCIEE), 1280 to 1288 (PAQTSCTEE), 1289 to 1297 (PAQTSYTQE), 1298 to 1306 (PAQTSCTEE), 1307 to 1315 (PAQTSCTEE), 1316 to 1324 (PAQTSYTQE), 1325 to 1333 (PAQTSCTEE), 1334 to 1342 (PAQTSYTQE), 1343 to 1351 (PAQTSCTEE), 1352 to 1360 (PAQTSYTEE), 1361 to 1369 (PAQTSYTEE), 1370 to 1378 (PAQTSYTQE), 1379 to 1387 (PAQTSCTEE), 1388 to 1396 (PAQTSYTEE), 1397 to 1405 (PAQTSYTEE), 1406 to 1414 (PAQTSYTQE), 1415 to 1423 (PAQTSYTEE), 1424 to 1432 (PAQTSYTEE), 1433 to 1441 (PAQTSYAQE), 1442 to 1450 (PAQTSYAEE), 1451 to 1459 (PAQTSYAEE), 1460 to 1468 (PAQTSYAEE), 1469 to 1477 (PAQTSYTQE), 1478 to 1486 (PAQTNYTEE), 1496 to 1504 (PAQTSYAEE), 1505 to 1513 (PAQTSYPEE), 1514 to 1522 (PAQTSYAEE), 1523 to 1531 (PAQTSYAEE), 1532 to 1540 (PAQTSYPEE), 1541 to 1549 (PAQTSYTEE), 1550 to 1558 (PAQTSYAKE), 1559 to 1567 (PAQTSYPEE), 1568 to 1576 (PAQTSYAEE), 1577 to 1585 (PAQTSYAEE), 1586 to 1594 (PAQTSYAEE), and 1595 to 1603 (PAQTSYSEE). 2 stretches are compositionally biased toward polar residues: residues 965 to 989 (PAQTSYAVEPAQTSYAEEPAQTSYT) and 1001 to 1020 (PAQTSCIEEPAQTSYTNPAA). The interval 965-1603 (PAQTSYAVEP…EPAQTSYSEE (639 aa)) is 37 X 9 AA repeat of P-A-Q-T-X-Y-X-X-E. The disordered stretch occupies residues 965–1651 (PAQTSYAVEP…RPDMPRNQPR (687 aa)). Positions 1046 to 1079 (PAQTSCIEEPAQTSYTNPAAETSYTEEPAQTSYT) are enriched in polar residues. Polar residues-rich tracts occupy residues 1107–1178 (EEPS…TSYT), 1190–1206 (PAQTSCIEEPAQTNYTK), 1217–1242 (PAQTSYTDPAAETSYTEEPAQTNYTV), 1251–1484 (EEPS…TNYT), and 1496–1601 (PAQT…TSYS). The segment at 1859-1881 (NECKECGECFATVEDLGRHQKIY) adopts a C2H2-type 6; degenerate zinc-finger fold. Residues 1900-1921 (LGLDGSPEEELEEQEEPEEPED) form a disordered region. Residues 1905 to 1921 (SPEEELEEQEEPEEPED) are compositionally biased toward acidic residues. 5 consecutive C2H2-type zinc fingers follow at residues 1924-1946 (YGCKDCGLGFADRADLRDHQKVH), 1980-2002 (YECPACGESFVHSSFLFEHQKVH), 2040-2062 (PQCQVCGQDFIHASVLSEHARGH), 2097-2119 (YECETCGESFPSQADLQEHMRVH), and 2148-2170 (YECKDCGKSFIHSTILTKHQKLH). Residues 2059–2102 (ARGHAGEGLPDQGQGGAGAAGPGPAPTEPQQDPGEEQRYECETC) form a disordered region. The segment at 2204-2322 (NVEAAEPEVE…DCGECGETFP (119 aa)) is disordered. Acidic residues-rich tracts occupy residues 2208–2228 (AEPEVEAAEPEVEAAEPEVEA) and 2257–2311 (EQPD…EEPY). 2 consecutive C2H2-type zinc fingers follow at residues 2312–2334 (YDCGECGETFPSGAAYAEHLTAH) and 2363–2385 (FKCDVCGQLFSDRLSLARHQNTH).

It belongs to the krueppel C2H2-type zinc-finger protein family. In terms of assembly, homodimer. Interacts with SIAH1A and SIAH2. Interacts with TRAF2. As to expression, expressed at high levels in the cerebellum and at moderate levels in the testis and ovary.

The protein localises to the nucleus. The protein resides in the cytoplasm. Functionally, induces apoptosis in cooperation with SIAH1A. Acts as a mediator between p53/TP53 and BAX in a neuronal death pathway that is activated by DNA damage. Acts synergistically with TRAF2 and inhibits TNF induced apoptosis through activation of NF-kappa-B. The chain is Paternally-expressed gene 3 protein (PEG3) from Bos taurus (Bovine).